The following is a 166-amino-acid chain: ATP synthase subunit b (166 aa).

A helical transmembrane segment spans residues 15-37; it reads TLYYLLIFAALLLLVKHFAWGPV.

It belongs to the ATPase B chain family. As to quaternary structure, F-type ATPases have 2 components, F(1) - the catalytic core - and F(0) - the membrane proton channel. F(1) has five subunits: alpha(3), beta(3), gamma(1), delta(1), epsilon(1). F(0) has three main subunits: a(1), b(2) and c(10-14). The alpha and beta chains form an alternating ring which encloses part of the gamma chain. F(1) is attached to F(0) by a central stalk formed by the gamma and epsilon chains, while a peripheral stalk is formed by the delta and b chains.

The protein localises to the cell membrane. Its function is as follows. F(1)F(0) ATP synthase produces ATP from ADP in the presence of a proton or sodium gradient. F-type ATPases consist of two structural domains, F(1) containing the extramembraneous catalytic core and F(0) containing the membrane proton channel, linked together by a central stalk and a peripheral stalk. During catalysis, ATP synthesis in the catalytic domain of F(1) is coupled via a rotary mechanism of the central stalk subunits to proton translocation. In terms of biological role, component of the F(0) channel, it forms part of the peripheral stalk, linking F(1) to F(0). This Lactobacillus johnsonii (strain CNCM I-12250 / La1 / NCC 533) protein is ATP synthase subunit b.